A 421-amino-acid polypeptide reads, in one-letter code: Testin (421 aa).

One can recognise a PET domain in the interval 92-199 (MILTNPVAAK…GDVKLPREMD (108 aa)). The interval 133 to 164 (EKQPVAGSEGAQYRKKQLAKQLPAHDQDPSKC) is disordered. The span at 155 to 164 (PAHDQDPSKC) shows a compositional bias: basic and acidic residues. LIM zinc-binding domains are found at residues 234-297 (YSCY…CDSE), 299-359 (PRCA…NHAV), and 362-421 (QGCH…KMMS).

Belongs to the prickle / espinas / testin family. As to quaternary structure, interacts via LIM domain 1 with ZYX. Interacts (via LIM domain 3) with ENAH and VASP. Interacts with ALKBH4, talin, actin, alpha-actinin, GRIP1 and PXN. Interacts (via LIM domain 2) with ACTL7A (via N-terminus). Heterodimer with ACTL7A; the heterodimer interacts with ENAH to form a heterotrimer.

Its subcellular location is the cytoplasm. The protein resides in the cell junction. The protein localises to the focal adhesion. In terms of biological role, scaffold protein that may play a role in cell adhesion, cell spreading and in the reorganization of the actin cytoskeleton. Plays a role in the regulation of cell proliferation. May act as a tumor suppressor. The polypeptide is Testin (TES) (Neofelis nebulosa (Clouded leopard)).